Reading from the N-terminus, the 241-residue chain is Small ribosomal subunit protein eS4 (241 aa).

One can recognise an S4 RNA-binding domain in the interval Leu37–Lys100.

It belongs to the eukaryotic ribosomal protein eS4 family.

In Methanospirillum hungatei JF-1 (strain ATCC 27890 / DSM 864 / NBRC 100397 / JF-1), this protein is Small ribosomal subunit protein eS4.